A 186-amino-acid chain; its full sequence is Peptide deformylase (186 aa).

Positions 113 and 156 each coordinate Fe cation. E157 is a catalytic residue. H160 lines the Fe cation pocket.

This sequence belongs to the polypeptide deformylase family. The cofactor is Fe(2+).

The enzyme catalyses N-terminal N-formyl-L-methionyl-[peptide] + H2O = N-terminal L-methionyl-[peptide] + formate. Its function is as follows. Removes the formyl group from the N-terminal Met of newly synthesized proteins. Requires at least a dipeptide for an efficient rate of reaction. N-terminal L-methionine is a prerequisite for activity but the enzyme has broad specificity at other positions. In Limosilactobacillus reuteri (strain DSM 20016) (Lactobacillus reuteri), this protein is Peptide deformylase.